Reading from the N-terminus, the 249-residue chain is uncharacterized protein (249 aa).

The helical transmembrane segment at 3–23 (WYWIGLLIVVVLFLLSAVRIV) threads the bilayer.

Belongs to the band 7/mec-2 family.

The protein localises to the membrane. This is an uncharacterized protein from Archaeoglobus fulgidus (strain ATCC 49558 / DSM 4304 / JCM 9628 / NBRC 100126 / VC-16).